The sequence spans 118 residues: Beta-2-microglobulin (118 aa).

The signal sequence occupies residues 1-20 (MARVVALVLLGLLSLTGLEA). An Ig-like C1-type domain is found at 25–111 (PKVQVYSRHP…QHSTLKEPLI (87 aa)). An intrachain disulfide couples cysteine 45 to cysteine 99.

It belongs to the beta-2-microglobulin family. Heterodimer of an alpha chain and a beta chain. Beta-2-microglobulin is the beta-chain of major histocompatibility complex class I molecules.

It is found in the secreted. Functionally, component of the class I major histocompatibility complex (MHC). Involved in the presentation of peptide antigens to the immune system. The chain is Beta-2-microglobulin (B2M) from Equus asinus (Donkey).